Consider the following 342-residue polypeptide: DNA-directed RNA polymerase subunit alpha (342 aa).

The tract at residues 1–239 (MTTFLAKNWS…DQLQVFINFQ (239 aa)) is alpha N-terminal domain (alpha-NTD). The tract at residues 254–342 (INPVLLKKVY…SLAKKHEDQY (89 aa)) is alpha C-terminal domain (alpha-CTD).

It belongs to the RNA polymerase alpha chain family. Homodimer. The RNAP catalytic core consists of 2 alpha, 1 beta, 1 beta' and 1 omega subunit. When a sigma factor is associated with the core the holoenzyme is formed, which can initiate transcription.

It carries out the reaction RNA(n) + a ribonucleoside 5'-triphosphate = RNA(n+1) + diphosphate. DNA-dependent RNA polymerase catalyzes the transcription of DNA into RNA using the four ribonucleoside triphosphates as substrates. The sequence is that of DNA-directed RNA polymerase subunit alpha from Orientia tsutsugamushi (strain Boryong) (Rickettsia tsutsugamushi).